Reading from the N-terminus, the 732-residue chain is Protein FAR1-RELATED SEQUENCE 4 (732 aa).

An FAR1 domain is found at leucine 11–proline 97. The MULE domain maps to valine 212 to proline 308. The segment at tyrosine 490–glycine 526 adopts an SWIM-type zinc-finger fold. The disordered stretch occupies residues glutamine 623–glycine 683. The span at glutamate 624–isoleucine 635 shows a compositional bias: polar residues.

The protein belongs to the FHY3/FAR1 family. Expressed in hypocotyls, rosette and cauline leaves, inflorescences stems, flowers and siliques.

It is found in the nucleus. Functionally, putative transcription activator involved in regulating light control of development. The polypeptide is Protein FAR1-RELATED SEQUENCE 4 (FRS4) (Arabidopsis thaliana (Mouse-ear cress)).